Reading from the N-terminus, the 259-residue chain is 5'-nucleotidase SurE (259 aa).

Positions 10, 11, 41, and 96 each coordinate a divalent metal cation.

It belongs to the SurE nucleotidase family. Requires a divalent metal cation as cofactor.

Its subcellular location is the cytoplasm. The catalysed reaction is a ribonucleoside 5'-phosphate + H2O = a ribonucleoside + phosphate. Nucleotidase that shows phosphatase activity on nucleoside 5'-monophosphates. This is 5'-nucleotidase SurE from Wolinella succinogenes (strain ATCC 29543 / DSM 1740 / CCUG 13145 / JCM 31913 / LMG 7466 / NCTC 11488 / FDC 602W) (Vibrio succinogenes).